A 381-amino-acid chain; its full sequence is Queuine tRNA-ribosyltransferase (381 aa).

Residue Asp96 is the Proton acceptor of the active site. Substrate is bound by residues Asp96 to Phe100, Asp150, Gln193, and Gly220. Residues Gly251–Ala257 form an RNA binding region. Asp270 acts as the Nucleophile in catalysis. Residues Thr275–Arg279 are RNA binding; important for wobble base 34 recognition. Cys308, Cys310, Cys313, and His339 together coordinate Zn(2+).

Belongs to the queuine tRNA-ribosyltransferase family. As to quaternary structure, homodimer. Within each dimer, one monomer is responsible for RNA recognition and catalysis, while the other monomer binds to the replacement base PreQ1. It depends on Zn(2+) as a cofactor.

The enzyme catalyses 7-aminomethyl-7-carbaguanine + guanosine(34) in tRNA = 7-aminomethyl-7-carbaguanosine(34) in tRNA + guanine. Its pathway is tRNA modification; tRNA-queuosine biosynthesis. In terms of biological role, catalyzes the base-exchange of a guanine (G) residue with the queuine precursor 7-aminomethyl-7-deazaguanine (PreQ1) at position 34 (anticodon wobble position) in tRNAs with GU(N) anticodons (tRNA-Asp, -Asn, -His and -Tyr). Catalysis occurs through a double-displacement mechanism. The nucleophile active site attacks the C1' of nucleotide 34 to detach the guanine base from the RNA, forming a covalent enzyme-RNA intermediate. The proton acceptor active site deprotonates the incoming PreQ1, allowing a nucleophilic attack on the C1' of the ribose to form the product. After dissociation, two additional enzymatic reactions on the tRNA convert PreQ1 to queuine (Q), resulting in the hypermodified nucleoside queuosine (7-(((4,5-cis-dihydroxy-2-cyclopenten-1-yl)amino)methyl)-7-deazaguanosine). The polypeptide is Queuine tRNA-ribosyltransferase (Bacillus subtilis (strain 168)).